A 127-amino-acid chain; its full sequence is Small ribosomal subunit protein uS11 (127 aa).

This sequence belongs to the universal ribosomal protein uS11 family. As to quaternary structure, part of the 30S ribosomal subunit. Interacts with proteins S7 and S18. Binds to IF-3.

Functionally, located on the platform of the 30S subunit, it bridges several disparate RNA helices of the 16S rRNA. Forms part of the Shine-Dalgarno cleft in the 70S ribosome. The protein is Small ribosomal subunit protein uS11 of Chlorobium chlorochromatii (strain CaD3).